An 836-amino-acid chain; its full sequence is Glutamate receptor ionotropic, kainate 1 (836 aa).

A signal peptide spans 1–30 (MERGTVLIQPGLWTRDTSWTLLYFLCYILP). Residues 31 to 561 (QTSPQVLRIG…VFSFLNPLSP (531 aa)) lie on the Extracellular side of the membrane. 7 N-linked (GlcNAc...) asparagine glycosylation sites follow: N68, N74, N276, N379, N413, N424, and N431. The L-glutamate site is built by P516, T518, and R523. An N-linked (GlcNAc...) asparagine glycan is attached at N546. A helical transmembrane segment spans residues 562–582 (DIWMYVLLACLGVSCVLFVIA). Topologically, residues 583–638 (RFTPYEWYNPHPCNPDSDVVENNFTLLNSFWFGVGALMQQGSELMPKALSTRIVGG) are cytoplasmic. Residues 639 to 659 (IWWFFTLIIISSYTANLAAFL) form a helical membrane-spanning segment. Residues 660-721 (TVERMESPID…RQPSALGVEN (62 aa)) lie on the Extracellular side of the membrane. Residues S689 and T690 each contribute to the L-glutamate site. A helical transmembrane segment spans residues 722-742 (IGGIFIVLAAGLVLSVFVAIG). Residues 743–836 (EFIYKSRKNN…RRTQRKETVA (94 aa)) lie on the Cytoplasmic side of the membrane.

Belongs to the glutamate-gated ion channel (TC 1.A.10.1) family. GRIK1 subfamily. Homotetramer or heterotetramer of pore-forming glutamate receptor subunits. Tetramers may be formed by the dimerization of dimers. Can form functional heteromeric receptors with GRIK4 and GRIK5. Interacts with KLHL17. Most abundant in the cerebellum. Also present in the suprachiasmatic nuclei of the hypothalamus.

It is found in the cell membrane. Its subcellular location is the postsynaptic cell membrane. The enzyme catalyses Ca(2+)(in) = Ca(2+)(out). Ionotropic glutamate receptor that functions as a cation-permeable ligand-gated ion channel, gated by L-glutamate and the glutamatergic agonist kainic acid. L-glutamate acts as an excitatory neurotransmitter at many synapses in the central nervous system. Binding of the excitatory neurotransmitter L-glutamate induces a conformation change, leading to the opening of the cation channel, and thereby converts the chemical signal to an electrical impulse. The receptor then desensitizes rapidly and enters a transient inactive state, characterized by the presence of bound agonist. This Mus musculus (Mouse) protein is Glutamate receptor ionotropic, kainate 1 (Grik1).